Consider the following 166-residue polypeptide: Deglycase PH1704 (166 aa).

The PfpI endopeptidase domain occupies 1-166 (MKVLFLTANE…WMREFVKLLK (166 aa)). Residue cysteine 100 is the Nucleophile of the active site. Histidine 101 is a catalytic residue.

Belongs to the peptidase C56 family. In terms of assembly, homohexamer formed by a dimer of trimers that assemble into a hollow ring structure.

Its subcellular location is the cytoplasm. It carries out the reaction N(omega)-(1-hydroxy-2-oxopropyl)-L-arginyl-[protein] + H2O = lactate + L-arginyl-[protein] + H(+). It catalyses the reaction N(6)-(1-hydroxy-2-oxopropyl)-L-lysyl-[protein] + H2O = lactate + L-lysyl-[protein] + H(+). The catalysed reaction is S-(1-hydroxy-2-oxopropyl)-L-cysteinyl-[protein] + H2O = lactate + L-cysteinyl-[protein] + H(+). The enzyme catalyses N(omega)-(1-hydroxy-2-oxoethyl)-L-arginyl-[protein] + H2O = L-arginyl-[protein] + glycolate + H(+). It carries out the reaction N(6)-(1-hydroxy-2-oxoethyl)-L-lysyl-[protein] + H2O = glycolate + L-lysyl-[protein] + H(+). It catalyses the reaction S-(1-hydroxy-2-oxoethyl)-L-cysteinyl-[protein] + H2O = glycolate + L-cysteinyl-[protein] + H(+). Deglycase that catalyzes the deglycation of the Maillard adducts formed between amino groups of proteins and reactive carbonyl groups of glyoxals. Thus, functions as a protein deglycase that repairs methylglyoxal- and glyoxal-glycated proteins, and releases repaired proteins and lactate or glycolate, respectively. Deglycates cysteine, arginine and lysine residues in proteins, and thus reactivates these proteins by reversing glycation by glyoxals. Acts on early glycation intermediates (hemithioacetals and aminocarbinols), preventing the formation of advanced glycation endproducts (AGE) that cause irreversible damage. Also displays proteolytic activity. The polypeptide is Deglycase PH1704 (Pyrococcus horikoshii (strain ATCC 700860 / DSM 12428 / JCM 9974 / NBRC 100139 / OT-3)).